A 150-amino-acid polypeptide reads, in one-letter code: Retinal rod rhodopsin-sensitive cGMP 3',5'-cyclic phosphodiesterase subunit delta (150 aa).

The interval 144–150 (RVRLFYV) is required for association with membranes.

The protein belongs to the PDE6D/unc-119 family. As to quaternary structure, interacts with the prenylated catalytic subunits of PDE6, an oligomer composed of two catalytic chains (PDE6A and PDE6B) and two inhibitory chains (gamma); has no effect on enzyme activity but promotes the release of the prenylated enzyme from cell membrane. Interacts with prenylated GRK1 and GRK7. Interacts with prenylated Ras family members, including RAP2A and RAP2C. Interacts with prenylated RHEB and NRAS. Interacts with prenylated HRAS and KRAS. Interacts with RAB13 (prenylated form); dissociates RAB13 from membranes. Interacts with prenylated INPP5E. Interacts with RAB28 (prenylated form); the interaction promotes RAB28 delivery to the photoreceptor outer segments. Interacts with RPGR. Interacts with ARL2. Interacts with ARL3; the interaction occurs specifically with the GTP-bound form of ARL3. Interaction with ARL2 and ARL3 promotes release of farnesylated cargo proteins. Widely expressed. Detected in various tissues including spleen, prostate gland, testis, ovary, small intestine, colon, retina, and peripheral blood.

It is found in the cytoplasm. The protein localises to the cytosol. Its subcellular location is the cytoplasmic vesicle membrane. The protein resides in the cytoskeleton. It localises to the cilium basal body. Promotes the release of prenylated target proteins from cellular membranes. Modulates the activity of prenylated or palmitoylated Ras family members by regulating their subcellular location. Required for normal ciliary targeting of farnesylated target proteins, such as INPP5E. Required for RAB28 localization to the cone cell outer segments in the retina. Modulates the subcellular location of target proteins by acting as a GTP specific dissociation inhibitor (GDI). Increases the affinity of ARL3 for GTP by several orders of magnitude. Stabilizes ARL3-GTP by decreasing the nucleotide dissociation rate. This is Retinal rod rhodopsin-sensitive cGMP 3',5'-cyclic phosphodiesterase subunit delta (PDE6D) from Homo sapiens (Human).